The following is a 622-amino-acid chain: Serine/threonine-protein kinase MAK (622 aa).

Residues 4–284 form the Protein kinase domain; the sequence is YTTMKQLGDG…ASQALKHPYF (281 aa). ATP is bound by residues 10 to 18 and lysine 33; that span reads LGDGTYGSV. Aspartate 125 (proton acceptor) is an active-site residue. Threonine 157 carries the post-translational modification Phosphothreonine; by autocatalysis. Tyrosine 159 bears the Phosphotyrosine; by autocatalysis mark. The interval 301–371 is disordered; it reads QTLHKQLQPL…QGHQKPPQTM (71 aa). The span at 336-355 shows a compositional bias: polar residues; that stretch reads QPKQGHQPLQTIQPPQNTVT.

Belongs to the protein kinase superfamily. CMGC Ser/Thr protein kinase family. CDC2/CDKX subfamily. In terms of assembly, interacts with AR and CDK20. Found in a complex containing MAK, AR and NCOA3. Interacts with FZR1 (via WD repeats). Interacts with RP1. Mg(2+) serves as cofactor. Post-translationally, autophosphorylated. Phosphorylated on serine and threonine residues. In terms of tissue distribution, in pre- and postmeiotic male germ cells in testis. In photoreceptor cells of the retina and in the olfactory receptors, and in certain epithelia of the respiratory tract and choroid plexus (brain).

It is found in the nucleus. It localises to the cytoplasm. The protein resides in the cytoskeleton. Its subcellular location is the microtubule organizing center. The protein localises to the centrosome. It is found in the spindle. It localises to the midbody. The protein resides in the cell projection. Its subcellular location is the cilium. The protein localises to the photoreceptor outer segment. It is found in the photoreceptor inner segment. It carries out the reaction L-seryl-[protein] + ATP = O-phospho-L-seryl-[protein] + ADP + H(+). The enzyme catalyses L-threonyl-[protein] + ATP = O-phospho-L-threonyl-[protein] + ADP + H(+). Its function is as follows. Essential for the regulation of ciliary length and required for the long-term survival of photoreceptors. Could have an important function in sensory cells and in spermatogenesis. May participate in signaling pathways used in visual and olfactory sensory transduction. Phosphorylates FZR1 in a cell cycle-dependent manner. Plays a role in the transcriptional coactivation of AR. In Mus musculus (Mouse), this protein is Serine/threonine-protein kinase MAK (Mak).